Reading from the N-terminus, the 236-residue chain is C-&gt;U-editing enzyme APOBEC-1 (236 aa).

The CMP/dCMP-type deaminase domain maps to 10 to 134 (GDPTLRRRIE…QQNRQGLRDL (125 aa)). Zn(2+) is bound at residue H61. E63 acts as the Proton donor in catalysis. Residues C93 and C96 each coordinate Zn(2+).

This sequence belongs to the cytidine and deoxycytidylate deaminase family. In terms of assembly, homodimer. Interacts with A1CF; form an mRNA editing complex. Interacts with RBM47; form an mRNA editing complex. Found in a complex with CELF2/CUGBP2 and A1CF. Interacts with HNRPAB. Interacts with SYNCRIP. It depends on Zn(2+) as a cofactor. Expressed exclusively in the small intestine.

Its subcellular location is the cytoplasm. The protein resides in the nucleus. The catalysed reaction is a cytidine in mRNA + H2O + H(+) = a uridine in mRNA + NH4(+). The enzyme catalyses cytidine(6666) in apoB mRNA + H2O + H(+) = uridine(6666) in apoB mRNA + NH4(+). In terms of biological role, cytidine deaminase catalyzing the cytidine to uridine postranscriptional editing of a variety of mRNAs. Form complexes with cofactors that confer differential editing activity and selectivity. Responsible for the postranscriptional editing of a CAA codon for Gln to a UAA codon for stop in the apolipoprotein B mRNA. Also involved in CGA (Arg) to UGA (Stop) editing in the NF1 mRNA. May also play a role in the epigenetic regulation of gene expression by participating in DNA demethylation. In Homo sapiens (Human), this protein is C-&gt;U-editing enzyme APOBEC-1.